A 389-amino-acid polypeptide reads, in one-letter code: Calreticulin (389 aa).

The signal sequence occupies residues 1-13 (MFTLFLLIALSSA). The N-domain stretch occupies residues 12–189 (SAKVYFHETF…GVEKQEGKFD (178 aa)). Ca(2+) is bound by residues T20, N52, and N53. C96 and C130 form a disulfide bridge. An alpha-D-glucoside is bound by residues Y100, K102, Y121, and D128. 7 consecutive repeat copies span residues 183-194 (KQEGKFDEDWDM), 202-213 (DPNVSKPADWVD), 219-230 (DPNDKKPEGWDD), 237-248 (DPNAKKPEEWND), 252-262 (GEWEAPTIENP), 266-276 (GEWKPKRIPNP), and 280-290 (GEWVHPQIANP). Residues 183–248 (KQEGKFDEDW…NAKKPEEWND (66 aa)) form a 4 X approximate repeats region. Residues 190–301 (EDWDMLAPKE…YVYDPELYKY (112 aa)) are P-domain. Residues 213–232 (DEKEIDDPNDKKPEGWDDIP) show a composition bias toward basic and acidic residues. The segment at 213–256 (DEKEIDDPNDKKPEGWDDIPKTIVDPNAKKPEEWNDEDDGEWEA) is disordered. The 3 X approximate repeats stretch occupies residues 252–290 (GEWEAPTIENPEYKGEWKPKRIPNPAYKGEWVHPQIANP). Residues 302 to 389 (DSFAYIGIDV…IKKEENKEEL (88 aa)) form a C-domain region. Residue D310 coordinates an alpha-D-glucoside. Ca(2+) is bound at residue D321. The stretch at 329 to 388 (IEEAEKEAKVILERNAAEKKMRDEIKEAEKQKEEEAKKEAEKQKEEETKEEIKKEENKEE) forms a coiled coil. Residues 347-389 (KKMRDEIKEAEKQKEEEAKKEAEKQKEEETKEEIKKEENKEEL) are disordered. Residues 386 to 389 (KEEL) carry the Prevents secretion from ER motif.

It belongs to the calreticulin family. In terms of assembly, interacts (via C-terminus) with host C1q.

The protein localises to the endoplasmic reticulum lumen. Its subcellular location is the cell projection. It localises to the uropodium. The protein resides in the cell surface. It is found in the phagocytic cup. Its function is as follows. Molecular calcium-binding chaperone promoting folding, oligomeric assembly and quality control in the ER via the calreticulin/calnexin cycle. This lectin may interact transiently with almost all of the monoglucosylated glycoproteins that are synthesized in the ER. Plays a role in host cell phagocytosis, possibly by acting as a receptor for host C1q. Binding to C1q prevents the activation of the host classical complement pathway. Also, binds to apoptotic host cells independently of host C1q and collectins. This is Calreticulin from Entamoeba histolytica (strain ATCC 30459 / HM-1:IMSS / ABRM).